The chain runs to 459 residues: Trigger factor (459 aa).

Residues 161–246 (GDKVVIDFQG…IKKIMEGKLP (86 aa)) enclose the PPIase FKBP-type domain.

This sequence belongs to the FKBP-type PPIase family. Tig subfamily.

It localises to the cytoplasm. The enzyme catalyses [protein]-peptidylproline (omega=180) = [protein]-peptidylproline (omega=0). Functionally, involved in protein export. Acts as a chaperone by maintaining the newly synthesized protein in an open conformation. Functions as a peptidyl-prolyl cis-trans isomerase. This Legionella pneumophila (strain Corby) protein is Trigger factor.